The primary structure comprises 325 residues: Gibberellin 20-oxidase-like protein (325 aa).

Residues 152 to 266 enclose the Fe2OG dioxygenase domain; it reads CHGYFRINNY…RFSLAFFWCF (115 aa). The Fe cation site is built by H186, D188, and H244. Residue R257 participates in 2-oxoglutarate binding.

Belongs to the iron/ascorbate-dependent oxidoreductase family. GA20OX subfamily. The cofactor is Fe(2+). Highly expressed in elongation zone of lateral roots.

Its function is as follows. Negative regulator of root hair growth. In Arabidopsis thaliana (Mouse-ear cress), this protein is Gibberellin 20-oxidase-like protein.